The sequence spans 197 residues: Rac-like GTP-binding protein ARAC11 (197 aa).

13-20 provides a ligand contact to GTP; sequence GDGAVGKT. An Effector region motif is present at residues 35–43; it reads YVPTVFDNF. Residues 60 to 64 and 118 to 121 contribute to the GTP site; these read DTAGQ and TKLD. Cysteine 194 is modified (cysteine methyl ester). Cysteine 194 carries S-geranylgeranyl cysteine lipidation. Positions 195 to 197 are cleaved as a propeptide — removed in mature form; sequence SIL.

It belongs to the small GTPase superfamily. Rho family. As to quaternary structure, part of a complex containing ROPGEF1 and PRK2. Interacts with UGT1, ICR1, ICR2, ICR3, ICR4 and ICR5. Interacts with PHIP1 when activated by GTP. Exclusively expressed in mature pollen and pollen tubes.

It is found in the cytoplasm. It localises to the membrane. It catalyses the reaction GTP + H2O = GDP + phosphate + H(+). Its function is as follows. May be involved in cell polarity control during the actin-dependent tip growth of pollen tubes. May regulate callose synthase 1 (CALS1) activity through the interaction with UGT1. Inactive GDP-bound Rho GTPases reside in the cytosol, are found in a complex with Rho GDP-dissociation inhibitors (Rho GDIs), and are released from the GDI protein in order to translocate to membranes upon activation. The protein is Rac-like GTP-binding protein ARAC11 of Arabidopsis thaliana (Mouse-ear cress).